The sequence spans 118 residues: Basic phospholipase A2 4 (118 aa).

7 cysteine pairs are disulfide-bonded: cysteine 11-cysteine 71, cysteine 27-cysteine 117, cysteine 29-cysteine 45, cysteine 44-cysteine 98, cysteine 51-cysteine 91, cysteine 60-cysteine 84, and cysteine 78-cysteine 89. Positions 28, 30, and 32 each coordinate Ca(2+). Histidine 48 is an active-site residue. Aspartate 49 provides a ligand contact to Ca(2+). The active site involves aspartate 92.

The protein belongs to the phospholipase A2 family. Group I subfamily. D49 sub-subfamily. In terms of assembly, monomer. The cofactor is Ca(2+). In terms of tissue distribution, expressed by the venom gland.

Its subcellular location is the secreted. It catalyses the reaction a 1,2-diacyl-sn-glycero-3-phosphocholine + H2O = a 1-acyl-sn-glycero-3-phosphocholine + a fatty acid + H(+). Functionally, PLA2 catalyzes the calcium-dependent hydrolysis of the 2-acyl groups in 3-sn-phosphoglycerides. This is Basic phospholipase A2 4 from Laticauda semifasciata (Black-banded sea krait).